The sequence spans 467 residues: Uronate isomerase (467 aa).

This sequence belongs to the metallo-dependent hydrolases superfamily. Uronate isomerase family.

It catalyses the reaction D-glucuronate = D-fructuronate. The enzyme catalyses aldehydo-D-galacturonate = keto-D-tagaturonate. Its pathway is carbohydrate metabolism; pentose and glucuronate interconversion. The chain is Uronate isomerase from Mannheimia succiniciproducens (strain KCTC 0769BP / MBEL55E).